Consider the following 135-residue polypeptide: ATP synthase epsilon chain (135 aa).

This sequence belongs to the ATPase epsilon chain family. As to quaternary structure, F-type ATPases have 2 components, CF(1) - the catalytic core - and CF(0) - the membrane proton channel. CF(1) has five subunits: alpha(3), beta(3), gamma(1), delta(1), epsilon(1). CF(0) has three main subunits: a, b and c.

Its subcellular location is the cell inner membrane. Functionally, produces ATP from ADP in the presence of a proton gradient across the membrane. The sequence is that of ATP synthase epsilon chain from Brucella suis (strain ATCC 23445 / NCTC 10510).